The primary structure comprises 384 residues: Guanine nucleotide-binding protein alpha-1 subunit (384 aa).

The interval 1 to 22 is disordered; it reads MGSLCSRNKHYSQADDEENTQT. The N-myristoyl glycine moiety is linked to residue Gly-2. The S-palmitoyl cysteine moiety is linked to residue Cys-5. A G-alpha domain is found at 38 to 384; the sequence is HIQKLLLLGA…RRNLFEAGLL (347 aa). Positions 41-54 are G1 motif; the sequence is KLLLLGAGDSGKST. Positions 49, 50, 51, 52, 53, 54, 163, 188, 194, 222, 288, 289, 291, and 356 each coordinate GTP. Residue Ser-53 participates in Mg(2+) binding. A G2 motif region spans residues 186-194; the sequence is DVLFARIRT. Position 194 (Thr-194) interacts with Mg(2+). The G3 motif stretch occupies residues 215–224; it reads YRLFDVGGQR. The G4 motif stretch occupies residues 284–291; the sequence is MLFLNKFD. Residues 354-359 are G5 motif; sequence TTALDQ.

This sequence belongs to the G-alpha family. G proteins are composed of 3 units; alpha, beta and gamma. The alpha chain contains the guanine nucleotide binding site. Mg(2+) serves as cofactor.

Guanine nucleotide-binding proteins (G proteins) are involved as modulators or transducers in various transmembrane signaling systems. This chain is Guanine nucleotide-binding protein alpha-1 subunit (GPA1), found in Solanum tuberosum (Potato).